The chain runs to 421 residues: UDP-N-acetylglucosamine 1-carboxyvinyltransferase (421 aa).

A phosphoenolpyruvate-binding site is contributed by 22 to 23 (KN). Arg-92 provides a ligand contact to UDP-N-acetyl-alpha-D-glucosamine. Cys-116 functions as the Proton donor in the catalytic mechanism. Position 116 is a 2-(S-cysteinyl)pyruvic acid O-phosphothioketal (Cys-116). UDP-N-acetyl-alpha-D-glucosamine-binding residues include Asp-306 and Val-328.

The protein belongs to the EPSP synthase family. MurA subfamily.

The protein resides in the cytoplasm. It carries out the reaction phosphoenolpyruvate + UDP-N-acetyl-alpha-D-glucosamine = UDP-N-acetyl-3-O-(1-carboxyvinyl)-alpha-D-glucosamine + phosphate. It functions in the pathway cell wall biogenesis; peptidoglycan biosynthesis. Cell wall formation. Adds enolpyruvyl to UDP-N-acetylglucosamine. The chain is UDP-N-acetylglucosamine 1-carboxyvinyltransferase from Thermotoga maritima (strain ATCC 43589 / DSM 3109 / JCM 10099 / NBRC 100826 / MSB8).